A 400-amino-acid polypeptide reads, in one-letter code: MTQFASPVLHSLLDTDAYKLHMQQAVFHHYYDVHVAAEFRCRGDDLLGIYADAIREQVQAMQHLRLQDDEYQWLSALPFFKADYLNWLREFRFNPEQVTVSNDNGKLDIRLSGPWREVILWEVPLLAVISEMVHRYRSPQADVAQALDTLENKLVDFSALTAGLDMSRFHLMDFGTRRRFSREVQETIVKRLQQESWFVGTSNYDLARRLSLTPMGTQAHEWFQAHQQISPDLANSQRAALAAWLEEYPDQLGIALTDCITMDAFLRDFGVEFASRYQGLRHDSGDPVEWGEKAIAHYEKLGIDPQSKTLVFSDNLDLRKAVELYRHFSSRVQLSFGIGTRLTCDIPQVKPLNIVIKLVECNGKPVAKLSDSPGKTICHDKAFVRALRKAFDLPHIKKAS.

Position 220 is a phosphohistidine; by autocatalysis (histidine 220).

It belongs to the NAPRTase family. Transiently phosphorylated on a His residue during the reaction cycle. Phosphorylation strongly increases the affinity for substrates and increases the rate of nicotinate D-ribonucleotide production. Dephosphorylation regenerates the low-affinity form of the enzyme, leading to product release.

The catalysed reaction is nicotinate + 5-phospho-alpha-D-ribose 1-diphosphate + ATP + H2O = nicotinate beta-D-ribonucleotide + ADP + phosphate + diphosphate. Its pathway is cofactor biosynthesis; NAD(+) biosynthesis; nicotinate D-ribonucleotide from nicotinate: step 1/1. Its function is as follows. Catalyzes the synthesis of beta-nicotinate D-ribonucleotide from nicotinate and 5-phospho-D-ribose 1-phosphate at the expense of ATP. This Escherichia coli O45:K1 (strain S88 / ExPEC) protein is Nicotinate phosphoribosyltransferase.